A 123-amino-acid polypeptide reads, in one-letter code: Small ribosomal subunit protein uS12 (123 aa).

Asp89 carries the post-translational modification 3-methylthioaspartic acid.

Belongs to the universal ribosomal protein uS12 family. As to quaternary structure, part of the 30S ribosomal subunit. Contacts proteins S8 and S17. May interact with IF1 in the 30S initiation complex.

In terms of biological role, with S4 and S5 plays an important role in translational accuracy. Interacts with and stabilizes bases of the 16S rRNA that are involved in tRNA selection in the A site and with the mRNA backbone. Located at the interface of the 30S and 50S subunits, it traverses the body of the 30S subunit contacting proteins on the other side and probably holding the rRNA structure together. The combined cluster of proteins S8, S12 and S17 appears to hold together the shoulder and platform of the 30S subunit. This chain is Small ribosomal subunit protein uS12, found in Afipia carboxidovorans (strain ATCC 49405 / DSM 1227 / KCTC 32145 / OM5) (Oligotropha carboxidovorans).